A 224-amino-acid polypeptide reads, in one-letter code: uncharacterized protein (224 aa).

This is an uncharacterized protein from Mycobacterium tuberculosis (strain CDC 1551 / Oshkosh).